The following is a 478-amino-acid chain: Zinc metalloproteinase/disintegrin (478 aa).

Residues 1 to 20 form the signal peptide; sequence MIEVLLVTICLAVFPYPGSS. Positions 21–190 are excised as a propeptide; that stretch reads IILESGNVDD…KASQLYLTPE (170 aa). Residue Gln-191 is modified to Pyrrolidone carboxylic acid. The 196-residue stretch at 197 to 392 folds into the Peptidase M12B domain; sequence RYIELAIVVD…SKPQCIINAP (196 aa). Glu-200 and Asp-284 together coordinate Ca(2+). 3 disulfide bridges follow: Cys-308-Cys-387, Cys-349-Cys-371, and Cys-351-Cys-354. His-333 is a binding site for Zn(2+). Residue Glu-334 is part of the active site. The Zn(2+) site is built by His-337 and His-343. Residues Cys-387 and Asn-390 each contribute to the Ca(2+) site. The propeptide occupies 393-410; the sequence is LRTDTVSTPVSGNEFLEA. The Disintegrin domain occupies 400-478; the sequence is TPVSGNEFLE…GQSADCPRNS (79 aa). 6 cysteine pairs are disulfide-bonded: Cys-414–Cys-429, Cys-416–Cys-424, Cys-423–Cys-446, Cys-437–Cys-443, Cys-442–Cys-467, and Cys-455–Cys-474. Residues 459 to 461 carry the Cell attachment site motif; that stretch reads RGD. The segment at 459-478 is disordered; it reads RGDNPDDRCTGQSADCPRNS. A compositionally biased stretch (polar residues) spans 468–478; the sequence is TGQSADCPRNS.

The protein belongs to the venom metalloproteinase (M12B) family. P-II subfamily. P-IIa sub-subfamily. Monomer. It depends on Zn(2+) as a cofactor. Not N-glycosylated. In terms of tissue distribution, expressed by the venom gland.

The protein resides in the secreted. It catalyses the reaction Cleavage of 3-Asn-|-Gln-4, 10-His-|-Leu-11 and 14-Ala-|-Leu-15 in the insulin B chain, and the bond Z-Gly-Pro-|-Leu-Gly-Pro in a small molecule substrate of microbial collagenase.. Zinc protease that induces hemorrhage. In terms of biological role, inhibits platelet aggregation induced by ADP, thrombin, and collagen. Acts by inhibiting fibrinogen interaction with platelet receptors GPIIb/GPIIIa (ITGA2B/ITGB3). In Protobothrops flavoviridis (Habu), this protein is Zinc metalloproteinase/disintegrin.